The chain runs to 434 residues: Beta-enolase (434 aa).

Ala-2 carries the post-translational modification N-acetylalanine. The residue at position 72 (Thr-72) is a Phosphothreonine. Phosphoserine is present on residues Ser-83 and Ser-157. Substrate is bound by residues His-158 and Glu-167. Phosphoserine is present on Ser-176. Thr-205 carries the phosphothreonine modification. Residue Glu-210 is the Proton donor of the active site. Thr-229 carries the phosphothreonine modification. Tyr-236 is subject to Phosphotyrosine. Residue Asp-245 participates in Mg(2+) binding. Ser-263 carries the post-translational modification Phosphoserine. Residues Glu-293 and Asp-318 each coordinate substrate. Residues Glu-293 and Asp-318 each coordinate Mg(2+). Lys-343 acts as the Proton acceptor in catalysis. Substrate contacts are provided by residues Ser-370 to Ser-373 and Lys-394.

Belongs to the enolase family. In terms of assembly, mammalian enolase is composed of 3 isozyme subunits, alpha, beta and gamma, which can form homodimers or heterodimers which are cell-type and development-specific. Interacts with PNKD. It depends on Mg(2+) as a cofactor. As to expression, the alpha/alpha homodimer is expressed in embryo and in most adult tissues. The alpha/beta heterodimer and the beta/beta homodimer are found in striated muscle, and the alpha/gamma heterodimer and the gamma/gamma homodimer in neurons.

The protein resides in the cytoplasm. The enzyme catalyses (2R)-2-phosphoglycerate = phosphoenolpyruvate + H2O. It functions in the pathway carbohydrate degradation; glycolysis; pyruvate from D-glyceraldehyde 3-phosphate: step 4/5. Its function is as follows. Glycolytic enzyme that catalyzes the conversion of 2-phosphoglycerate to phosphoenolpyruvate. Appears to have a function in striated muscle development and regeneration. In Oryctolagus cuniculus (Rabbit), this protein is Beta-enolase (ENO3).